We begin with the raw amino-acid sequence, 622 residues long: Fanconi anemia group G protein (622 aa).

At Ser7 the chain carries Phosphoserine. TPR repeat units lie at residues Val246–Trp279, Ser344–Ser377, Ser453–Ala486, and Ala514–Asn547.

In terms of assembly, belongs to the multisubunit FA complex composed of FANCA, FANCB, FANCC, FANCE, FANCF, FANCG, FANCL/PHF9 and FANCM. The complex is not found in FA patients. In complex with FANCF, FANCA and FANCL, but not with FANCC, nor FANCE, interacts with HES1; this interaction may be essential for the stability and nuclear localization of FA core complex proteins. The complex with FANCC and FANCG may also include EIF2AK2 and HSP70. When phosphorylated at Ser-7, forms a complex with BRCA2, FANCD2 and XRCC3. As to expression, highly expressed in testis and thymus. Found in lymphoblasts.

The protein resides in the nucleus. The protein localises to the cytoplasm. DNA repair protein that may operate in a postreplication repair or a cell cycle checkpoint function. May be implicated in interstrand DNA cross-link repair and in the maintenance of normal chromosome stability. Candidate tumor suppressor gene. This is Fanconi anemia group G protein (FANCG) from Homo sapiens (Human).